Consider the following 257-residue polypeptide: Ribonuclease HIII (257 aa).

The region spanning 71 to 257 (KKLPGCDESG…ERFIKLNFNV (187 aa)) is the RNase H type-2 domain. D77, E78, and D179 together coordinate a divalent metal cation.

It belongs to the RNase HII family. RnhC subfamily. The cofactor is Mn(2+). Requires Mg(2+) as cofactor.

It localises to the cytoplasm. The catalysed reaction is Endonucleolytic cleavage to 5'-phosphomonoester.. In terms of biological role, endonuclease that specifically degrades the RNA of RNA-DNA hybrids. The polypeptide is Ribonuclease HIII (rnhC) (Aquifex aeolicus (strain VF5)).